The chain runs to 223 residues: Glycoprotein 42 (223 aa).

The Intravirion segment spans residues methionine 1 to arginine 8. A helical membrane pass occupies residues valine 9 to proline 29. The Virion surface portion of the chain corresponds to arginine 30–serine 223. 5 disulfide bridges follow: cysteine 99/cysteine 138, cysteine 102/cysteine 115, cysteine 128/cysteine 214, cysteine 132/cysteine 216, and cysteine 192/cysteine 208. The C-type lectin domain maps to tyrosine 111–valine 217.

The protein belongs to the epstein barr virus gp42 family. Forms a complex with gp25 and gp85 via its N-terminus; this complex is used for invasion of B-lymphocytes. Interacts with human HLA-DRA and HLA-DRB1.

Its subcellular location is the virion membrane. The protein resides in the host membrane. In terms of biological role, plays a role in virion attachment to host B-lymphocytes, through binding to leukocyte antigen (HLA) class II and subsequently participates in fusion of the virion with host membranes. May act as a tropism switch that directs fusion with B-lymphocytes and inhibits fusion with epithelial cells. Additionally, hampers T-cell recognition via HLA class II molecules through steric hindrance of T-cell receptor-class II-peptide interaction. Soluble gp42 inhibits HLA class II-restricted antigen presentation to T-cells through binding to immature and mature HLA class II complexes. In Epstein-Barr virus (strain B95-8) (HHV-4), this protein is Glycoprotein 42.